The chain runs to 343 residues: Protein RecA (343 aa).

An ATP-binding site is contributed by 64–71; it reads GPESSGKT.

This sequence belongs to the RecA family.

The protein localises to the cytoplasm. In terms of biological role, can catalyze the hydrolysis of ATP in the presence of single-stranded DNA, the ATP-dependent uptake of single-stranded DNA by duplex DNA, and the ATP-dependent hybridization of homologous single-stranded DNAs. It interacts with LexA causing its activation and leading to its autocatalytic cleavage. The protein is Protein RecA of Bacillus thuringiensis (strain Al Hakam).